The primary structure comprises 561 residues: Putative transport protein YbjL (561 aa).

The next 5 helical transmembrane spans lie at 8–28 (LLNG…LCLG), 32–52 (LGSI…LLGQ), 66–86 (FMLF…SIFF), 94–114 (MLAL…GKLF), and 158–178 (NLSL…IVGA). RCK C-terminal domains follow at residues 202–288 (LDTD…SFRN) and 292–373 (VFDR…RIGF). Transmembrane regions (helical) follow at residues 383 to 403 (LLAF…TFQF), 406 to 426 (FSFG…LGFM), 451 to 471 (VFMA…LGAI), 475 to 495 (MLVA…LFGA), and 540 to 560 (AIAN…WPGL).

The protein belongs to the AAE transporter (TC 2.A.81) family. YbjL subfamily.

The protein localises to the cell membrane. This is Putative transport protein YbjL from Escherichia fergusonii (strain ATCC 35469 / DSM 13698 / CCUG 18766 / IAM 14443 / JCM 21226 / LMG 7866 / NBRC 102419 / NCTC 12128 / CDC 0568-73).